A 147-amino-acid chain; its full sequence is Hemoglobin subunit beta-1 (147 aa).

Residues 3–147 (EWTAAERRHV…VVSALGRQYH (145 aa)) enclose the Globin domain. Heme b is bound by residues His64 and His93.

Belongs to the globin family. In terms of assembly, hb 1 is a heterotetramer of two alpha-1 and two beta-1 chains. In terms of tissue distribution, red blood cells.

Its function is as follows. Involved in oxygen transport from gills to the various peripheral tissues. This chain is Hemoglobin subunit beta-1 (hbb1), found in Gadus morhua (Atlantic cod).